A 37-amino-acid chain; its full sequence is Large ribosomal subunit protein bL36 (37 aa).

It belongs to the bacterial ribosomal protein bL36 family.

The polypeptide is Large ribosomal subunit protein bL36 (Nitratiruptor sp. (strain SB155-2)).